Reading from the N-terminus, the 360-residue chain is MSLLKGRNYYKPFTYPEFYNKWDKHEKSHWLPSEVPMHDDVNDWKNRLNDNQRDFLTNIFRFFTQGDVDVASAYYTQYLPFFKLPEVTMMMGGFAGREGVHIDAYSYLLETLGMPEATYKEFLMYEEMKDKQDYIKKFSDSRHILGKGEENLTTEDKEHIAAGIALFSGFTEGMQLFSTFAMLLIFPLNGFMKGMGQIVTWSIVDETQHTEGMIELFKVFVEENKTGDQPIRPSVLQETVYKIAKEMVGLEEAFIDLVFKKYKDEPINDDNDLETKDNKDFFGLTPQRLKAYIKYIADRRLNLMGYKSIFNLEPYPTNPLPELEIMINAPTHTNFFENRSTDYANVSTKGTWSEIWNKPQ.

Residues aspartate 67, glutamate 98, and histidine 101 each coordinate Fe cation. The active site involves tyrosine 105. Residues glutamate 172, glutamate 206, and histidine 209 each contribute to the Fe cation site.

The protein belongs to the ribonucleoside diphosphate reductase small chain family. Heterotetramer composed of a homodimer of the large subunit (R1) and a homodimer of the small subunit (R2). Larger multisubunit protein complex are also active, composed of (R1)n(R2)n. Requires Fe cation as cofactor.

It catalyses the reaction a 2'-deoxyribonucleoside 5'-diphosphate + [thioredoxin]-disulfide + H2O = a ribonucleoside 5'-diphosphate + [thioredoxin]-dithiol. In terms of biological role, ribonucleoside-diphosphate reductase holoenzyme provides the precursors necessary for viral DNA synthesis. Allows virus growth in non-dividing cells. Catalyzes the biosynthesis of deoxyribonucleotides from the corresponding ribonucleotides. The protein is Probable ribonucleoside-diphosphate reductase small subunit 376L of Acheta domesticus (House cricket).